Reading from the N-terminus, the 149-residue chain is UPF0260 protein PSPPH_1551 (149 aa).

The protein belongs to the UPF0260 family.

This is UPF0260 protein PSPPH_1551 from Pseudomonas savastanoi pv. phaseolicola (strain 1448A / Race 6) (Pseudomonas syringae pv. phaseolicola (strain 1448A / Race 6)).